The chain runs to 244 residues: Na(+)-translocating NADH-quinone reductase subunit E (244 aa).

Transmembrane regions (helical) follow at residues 11-31 (LLGIFLQATFIQNILLSTFLG), 47-67 (GLGMSVALVLTITGSINWLIH), 90-110 (FLELITFIVVIAAFTQILELL), 123-143 (GIFLPLIAVNCAILGGVLFGI), 153-173 (VVFSLGSGCGWWLAIVLFATI), and 189-209 (MGISFITTGLIAMAFMGLTGI).

It belongs to the NqrDE/RnfAE family. In terms of assembly, composed of six subunits; NqrA, NqrB, NqrC, NqrD, NqrE and NqrF.

It localises to the cell inner membrane. The catalysed reaction is a ubiquinone + n Na(+)(in) + NADH + H(+) = a ubiquinol + n Na(+)(out) + NAD(+). In terms of biological role, NQR complex catalyzes the reduction of ubiquinone-1 to ubiquinol by two successive reactions, coupled with the transport of Na(+) ions from the cytoplasm to the periplasm. NqrA to NqrE are probably involved in the second step, the conversion of ubisemiquinone to ubiquinol. This Chlamydia muridarum (strain MoPn / Nigg) protein is Na(+)-translocating NADH-quinone reductase subunit E.